Here is a 229-residue protein sequence, read N- to C-terminus: Ribonuclease T (229 aa).

Positions 23-197 (VIIDVETAGF…YDTERTAKLF (175 aa)) constitute an Exonuclease domain. Asp26, Glu28, His184, and Asp189 together coordinate Mg(2+). The active-site Proton donor/acceptor is His184.

This sequence belongs to the RNase T family. As to quaternary structure, homodimer. Mg(2+) serves as cofactor.

Its function is as follows. Trims short 3' overhangs of a variety of RNA species, leaving a one or two nucleotide 3' overhang. Responsible for the end-turnover of tRNA: specifically removes the terminal AMP residue from uncharged tRNA (tRNA-C-C-A). Also appears to be involved in tRNA biosynthesis. This Haemophilus influenzae (strain 86-028NP) protein is Ribonuclease T.